Reading from the N-terminus, the 148-residue chain is Lysozyme C-1 (148 aa).

A signal peptide spans 1–18 (MKALLTLGLLLLSVTAQA). One can recognise a C-type lysozyme domain in the interval 19–148 (KVYNRCELAR…LSQYIRNCGV (130 aa)). Cystine bridges form between Cys24–Cys146, Cys48–Cys134, Cys83–Cys99, and Cys95–Cys113. Catalysis depends on residues Glu53 and Asp71.

The protein belongs to the glycosyl hydrolase 22 family. Monomer. In terms of tissue distribution, expressed strongly only in small intestine.

It is found in the secreted. It catalyses the reaction Hydrolysis of (1-&gt;4)-beta-linkages between N-acetylmuramic acid and N-acetyl-D-glucosamine residues in a peptidoglycan and between N-acetyl-D-glucosamine residues in chitodextrins.. Functionally, lysozymes have primarily a bacteriolytic function; those in tissues and body fluids are associated with the monocyte-macrophage system and enhance the activity of immunoagents. Lyz1 is active against a range of Gram-positive and Gram-negative bacteria. Less effective than Lyz2 in killing Gram-negative bacteria. Lyz1 and Lyz2 are equally effective in killing Gram-positive bacteria. This Mus musculus (Mouse) protein is Lysozyme C-1 (Lyz1).